Here is a 476-residue protein sequence, read N- to C-terminus: MIAPDLTMDIPTELGRVHFVGIGGSGMSGIARLFLAAGHRVTGSDSRDSDAVQALRELGAEIHVGHDAAHVGDADALVVTGALWQDNPEYVLAKERGLPILHRSQALAWLISGQRLVAVAGAHGKTTSTGMIVTALLEAGRDPSFVNGGVIGGIGVSSAPGSEELFVVEADESDGSFLLYDTAVALITNVDADHLDHYGSHEAFDDAFVRFASAASELVVISSDDPGARRVTARIEGRVVTFGEDPAADIRITDIVTDGPVAFTLTHDGVSRRAALRVPGRHNAINAAGAYAVLVGLGVDPDDAIAGLAGFSGTSRRFELHAEVRGVSVYDDYAHHPTEVRAALEAARTVVGEGRIIAVHQPHLYSRTQMMAGDFARVYEELADHTIVLDVFGAREDPIPGVTGALVSERFADASHVDYLPDWQQAADRAAEIARDGDFIVTLSCGDVYRIIPQVIGALERPAGSAQPAASSRPRE.

ATP is bound at residue 121–127 (GAHGKTT).

The protein belongs to the MurCDEF family.

The protein localises to the cytoplasm. The catalysed reaction is UDP-N-acetyl-alpha-D-muramate + L-alanine + ATP = UDP-N-acetyl-alpha-D-muramoyl-L-alanine + ADP + phosphate + H(+). It participates in cell wall biogenesis; peptidoglycan biosynthesis. In terms of biological role, cell wall formation. The polypeptide is UDP-N-acetylmuramate--L-alanine ligase (Clavibacter sepedonicus (Clavibacter michiganensis subsp. sepedonicus)).